Here is a 99-residue protein sequence, read N- to C-terminus: Large ribosomal subunit protein uL23 (99 aa).

It belongs to the universal ribosomal protein uL23 family. As to quaternary structure, part of the 50S ribosomal subunit. Contacts protein L29, and trigger factor when it is bound to the ribosome.

Its function is as follows. One of the early assembly proteins it binds 23S rRNA. One of the proteins that surrounds the polypeptide exit tunnel on the outside of the ribosome. Forms the main docking site for trigger factor binding to the ribosome. The chain is Large ribosomal subunit protein uL23 from Rhodopseudomonas palustris (strain HaA2).